We begin with the raw amino-acid sequence, 115 residues long: Large ribosomal subunit protein bL19 (115 aa).

It belongs to the bacterial ribosomal protein bL19 family.

Its function is as follows. This protein is located at the 30S-50S ribosomal subunit interface and may play a role in the structure and function of the aminoacyl-tRNA binding site. The sequence is that of Large ribosomal subunit protein bL19 from Streptococcus pneumoniae serotype 2 (strain D39 / NCTC 7466).